The primary structure comprises 250 residues: Small ribosomal subunit protein uS2 (250 aa).

The protein belongs to the universal ribosomal protein uS2 family.

The chain is Small ribosomal subunit protein uS2 from Acidovorax sp. (strain JS42).